Reading from the N-terminus, the 117-residue chain is Gamma-aminobutyric acid receptor-associated protein-like 1 (117 aa).

A lipid anchor (Phosphatidylethanolamine amidated glycine; alternate) is attached at G116. The Phosphatidylserine amidated glycine; alternate moiety is linked to residue G116. Position 117 (K117) is a propeptide, removed in mature form.

Belongs to the ATG8 family. In terms of assembly, interacts with ATG13, OPRK1, RB1CC1 and ULK1. Interacts with TP53INP1 and TP53INP2. Directly interacts with SQSTM1. Interacts with ATG3, ATG7 and MAP15. Interacts with TECPR2. Interacts with TBC1D5. Interacts with MAPK15. Interacts with TRIM5. Interacts with MEFV and TRIM21. Interacts with WDFY3. Interacts with the reticulophagy receptor TEX264. Interacts with UBA5. Interacts with KBTBD6 and KBTBD7; the interaction is direct. Interacts with reticulophagy regulators RETREG1, RETREG2 and RETREG3. Interacts with IRGM. Interacts with DNM2. Interacts with NCOA4 (via C-terminus). The precursor molecule is cleaved by ATG4 (ATG4A, ATG4B, ATG4C or ATG4D) to expose the glycine at the C-terminus and form the cytosolic form, GABARAPL1-I. The processed form is then activated by APG7L/ATG7, transferred to ATG3 and conjugated to phosphatidylethanolamine (PE) phospholipid to form the membrane-bound form, GABARAPL1-II. During non-canonical autophagy, the processed form is conjugated to phosphatidylserine (PS) phospholipid. ATG4 proteins also mediate the delipidation of PE-conjugated forms required for GABARAPL1 recycling when autophagosomes fuse with lysosomes. In addition, ATG4B and ATG4D mediate delipidation of ATG8 proteins conjugated to PS during non-canonical autophagy. ATG4B constitutes the major protein for proteolytic activation. ATG4D is the main enzyme for delipidation activity.

It is found in the cytoplasmic vesicle. It localises to the autophagosome. Its subcellular location is the cytoplasmic vesicle membrane. The protein localises to the cytoplasm. The protein resides in the cytoskeleton. It is found in the endoplasmic reticulum. It localises to the golgi apparatus. Ubiquitin-like modifier that increases cell-surface expression of kappa-type opioid receptor through facilitating anterograde intracellular trafficking of the receptor. Involved in formation of autophagosomal vacuoles. While LC3s are involved in elongation of the phagophore membrane, the GABARAP/GATE-16 subfamily is essential for a later stage in autophagosome maturation. Through its interaction with the reticulophagy receptor TEX264, participates in the remodeling of subdomains of the endoplasmic reticulum into autophagosomes upon nutrient stress, which then fuse with lysosomes for endoplasmic reticulum turnover. The chain is Gamma-aminobutyric acid receptor-associated protein-like 1 from Pongo abelii (Sumatran orangutan).